The sequence spans 386 residues: MIRAANGFRISVRNTAVCLAPNFRQLKGFSIINLGSLQYFRYNSVYSKSIRLVNTLENRIVPVYKECASPQSIGGKSNLKQLQWPKPPKNILILKKRMDERVDHCFETLVQHLQQTYPDICIITETDVAKKFSYLNLYTWTEISDLEQKVDAIITVGGDGTILHAASLFARSGMPPILSFSLGTLGFLLPFDFGSFQTAFADFYNSRSFVLMRMRLRVAMKTKLYNESIYAMNEMHIHRGLSPHMAVLKVFVNDKFLTEAVADGLIISTPTGSTAYSLSSGGPIVHPSINALLLTPICPNSLSFRPVLFPDTFKISIETSNKSRVRPQLSIDGRPLGLTDIGQRIDITSVKDNAIPCIIRSHKEDDWVSDIVSLLRWNHPFHRKGW.

The N-terminal 42 residues, 1–42, are a transit peptide targeting the mitochondrion; that stretch reads MIRAANGFRISVRNTAVCLAPNFRQLKGFSIINLGSLQYFRY.

Belongs to the NAD kinase family.

Its subcellular location is the mitochondrion. The catalysed reaction is NADH + ATP = ADP + NADPH + H(+). Functionally, phosphorylates both NADH and NAD(+), with a preference for NADH. Anti-oxidant factor and key source of the cellular reductant NADPH. This is NADH kinase pos5, mitochondrial (pos5) from Schizosaccharomyces pombe (strain 972 / ATCC 24843) (Fission yeast).